A 577-amino-acid chain; its full sequence is Thrombomodulin (577 aa).

Residues 1-16 form the signal peptide; that stretch reads MLGIFFLGVLAPASLG. The Extracellular segment spans residues 17-517; the sequence is LSALAKLQPT…GPPSARPVHS (501 aa). The 137-residue stretch at 31-167 folds into the C-type lectin domain; sequence VEHECFALFQ…TETQGFLCEF (137 aa). The N-linked (GlcNAc...) asparagine glycan is linked to N113. An intrachain disulfide couples C135 to C156. EGF-like domains follow at residues 240 to 280 and 283 to 323; these read GAWN…RSCA and VVQS…HRCE. N243 is a glycosylation site (N-linked (GlcNAc...) asparagine). 18 disulfides stabilise this stretch: C244-C255, C251-C264, C266-C279, C287-C295, C291-C307, C309-C322, C328-C339, C335-C348, C350-C361, C368-C377, C373-C387, C389-C403, C407-C416, C412-C424, C426-C438, C444-C454, C449-C463, and C465-C479. An N-linked (GlcNAc...) asparagine glycan is attached at N256. Residues 324–362 form the EGF-like 3; calcium-binding domain; it reads DVDDCKQGPNPCPQLCVNTKGGFECFCYDGYELVDGECV. EGF-like domains lie at 364–404 and 403–439; these read LLDP…HKCE and CEMFCNETSCPADCDPNSPTVCECPEGFILDEGSVCT. Residue N408 is glycosylated (N-linked (GlcNAc...) asparagine). The 41-residue stretch at 440 to 480 folds into the EGF-like 6; calcium-binding domain; it reads DIDECSQGECFTSECRNFPGSYECICGPDTALAGQISKDCD. The interval 476–513 is disordered; the sequence is SKDCDPIPVREDTKEEEGSGEPPVSPTPGSPTGPPSAR. A compositionally biased stretch (basic and acidic residues) spans 477–492; that stretch reads KDCDPIPVREDTKEEE. Residue S494 is glycosylated (O-linked (Xyl...) (chondroitin sulfate) serine). Pro residues predominate over residues 498–512; it reads PVSPTPGSPTGPPSA. A helical membrane pass occupies residues 518–541; the sequence is GVLIGISIASLSLVVALLALLCHL. The Cytoplasmic portion of the chain corresponds to 542 to 577; sequence RKKQGAARAELEYKCASSAKEVVLQHVRTDRTLQKF.

In terms of assembly, interacts with ITGAL, ITGAM and ITGB2. Interacts with thrombin/F2; this interaction switches the specificity of thrombin from a procoagulant to an anticoagulant and antifibrinolytic protease. Interacts with ANGP1 and ANGP2; these interactions significantly inhibit the generation of activated PC and TAFIa/CPB2 by the thrombin/thrombomodulin complex. Interacts with PF4; this interaction enhances generation of activated protein C. Interacts with HMGB1; this interaction inhibits HMGB1 inflammatory activity. Endothelial cells are unique in synthesizing thrombomodulin.

The protein localises to the membrane. In terms of biological role, endothelial cell receptor that plays a critical role in regulating several physiological processes including hemostasis, coagulation, fibrinolysis, inflammation, and angiogenesis. Acts as a cofactor for thrombin activation of protein C/PROC on the surface of vascular endothelial cells leading to initiation of the activated protein C anticoagulant pathway. Also accelerates the activation of the plasma carboxypeptidase B2/CPB2, which catalyzes removal of C-terminal basic amino acids from its substrates including kinins or anaphylatoxins leading to fibrinolysis inhibition. Plays critical protective roles in changing the cleavage specificity of protease-activated receptor 1/PAR1, inhibiting endothelial cell permeability and inflammation. Suppresses inflammation distinctly from its anticoagulant cofactor activity by sequestering HMGB1 thereby preventing it from engaging cellular receptors such as RAGE and contributing to the inflammatory response. The chain is Thrombomodulin (Thbd) from Mus musculus (Mouse).